We begin with the raw amino-acid sequence, 492 residues long: Alpha-2-antiplasmin (492 aa).

Residues 1–22 (MALLWGLLALILSCLSSLCSAQ) form the signal peptide. Residues 23–40 (FSPVSTMEPLDLQLMDGQ) constitute a propeptide that is removed on maturation. Positions 56–76 (QEPGGQIAPKKAPEDCKLSPT) are disordered. C71 and C144 are joined by a disulfide. N127, N249, N296, N310, and N317 each carry an N-linked (GlcNAc...) asparagine glycan. The segment at 433–492 (SVRNPNPGAQPERKEQQDSPDGKDSFQDHKGLPRGDKPFDPDLKLGPPSEEDYAQPSSPK) is disordered. Basic and acidic residues predominate over residues 443 to 475 (PERKEQQDSPDGKDSFQDHKGLPRGDKPFDPDL). Y485 is subject to Sulfotyrosine.

Belongs to the serpin family. Forms protease inhibiting heterodimer with TMPRSS7. Post-translationally, proteolytically cleaved at Pro-31 by both the prolyl endopeptidase FAP form and antiplasmin-cleaving enzyme FAP soluble form to generate mature alpha-2-antiplasmin. Expressed by the liver and secreted in plasma.

The protein resides in the secreted. Its function is as follows. Serine protease inhibitor. The major targets of this inhibitor are plasmin and trypsin, but it also inactivates matriptase-3/TMPRSS7 and chymotrypsin. This chain is Alpha-2-antiplasmin (SERPINF2), found in Bos taurus (Bovine).